Reading from the N-terminus, the 92-residue chain is Small ribosomal subunit protein uS15c (92 aa).

The protein belongs to the universal ribosomal protein uS15 family. As to quaternary structure, part of the 30S ribosomal subunit.

The protein localises to the plastid. It is found in the chloroplast. The polypeptide is Small ribosomal subunit protein uS15c (rps15) (Guizotia abyssinica (Niger)).